Here is a 286-residue protein sequence, read N- to C-terminus: Putative inorganic pyrophosphatase C3A12.02 (286 aa).

Arg-85 lines the diphosphate pocket. 3 residues coordinate Mg(2+): Asp-122, Asp-127, and Asp-159.

Belongs to the PPase family. Mg(2+) serves as cofactor.

It is found in the cytoplasm. It catalyses the reaction diphosphate + H2O = 2 phosphate + H(+). In Schizosaccharomyces pombe (strain 972 / ATCC 24843) (Fission yeast), this protein is Putative inorganic pyrophosphatase C3A12.02.